The following is a 1025-amino-acid chain: Multidrug resistance protein MdtC (1025 aa).

12 helical membrane-spanning segments follow: residues 15-35 (ILIS…LPVA), 333-353 (EVEQ…FLFL), 360-380 (LIPA…MYLC), 387-407 (LSLM…IVVL), 431-451 (VGFT…PLLL), 469-489 (VAIG…CGWL), 528-548 (LTGL…ISIP), 851-871 (AQVI…GMLY), 875-895 (VHPL…LLAL), 897-917 (IFDA…IGIV), 953-973 (PIMM…LSGG), and 984-1004 (ITIV…TPVV).

The protein belongs to the resistance-nodulation-cell division (RND) (TC 2.A.6) family. MdtC subfamily. As to quaternary structure, part of a tripartite efflux system composed of MdtA, MdtB and MdtC. MdtC forms a heteromultimer with MdtB.

The protein resides in the cell inner membrane. In Klebsiella pneumoniae (strain 342), this protein is Multidrug resistance protein MdtC.